A 147-amino-acid chain; its full sequence is Hemoglobin subunit beta-1 (147 aa).

Positions 3-147 (EWTATERTHI…VVSALGRQYH (145 aa)) constitute a Globin domain. The heme b site is built by His-64 and His-93.

Belongs to the globin family. As to quaternary structure, hb 1 is a heterotetramer of two alpha-1 and two beta-1 chains. Hb 2 is a heterotetramer of two alpha-2 and two beta-1 chains. As to expression, red blood cells.

Its function is as follows. Involved in oxygen transport from gills to the various peripheral tissues. The chain is Hemoglobin subunit beta-1 (hbb1) from Boreogadus saida (Polar cod).